The sequence spans 972 residues: MPSNHNTSVPKFSSFNSVKAKKNPITKSNKKYRSSHDQVSSNHAKSSFPSHRSIQSNFAVDTKGEKQNLLYGINKRPVPKYHRSSSSVYGSAPLLRIVKESKEGITLNKKKSLEIKYDEERSFDEKENDESEFEDGQQGFIPLLVNRNSDPSEKSTFSLNILKAIKETDEEIKKNPGKARLWIKMCEYQERLLFDEFRRSNSDDIKGKLKIENNSRSVKLSILEKALKEVKGCDHEILVSYYLQLGSEEWSKEETNQKFEEVLIEHPGYLNLWMKYAEYFTGISEFTFNDCLNMFSKCFKFLKQKLSDRKSCKERESTDVTSNFEVEEAILHLLIRLCDFLKNCGYYELAWSIFQANMELCYFYPRYLEKKLDSTFFESFSKFWNSDTPKFSEENARGWCNVLDDESSQQNQNFSSEIGIFQTVKLWYLNESKFDTNPPPRSTMSCRKLSGIDDPFRYIVFNDIQDFIVCFESETIAFAFKYKFFAFCGVPLFPPGISTNSWFASYDKGIYNLLFGMASSESFINGQIAEKNSFQFPCSILPSYIDLFISLMSFKNLNFKLFDYNLAHHVKESMERAFHQLVFSADDEYLASVYLIYLKQMETKNLSEEKPQVNKIVKKILKKYDSSVSVWNTYAQLEHLSGAFTMAETIFKTIFQIHASQLRYIDNLNVYKNWAFRKLLINDTEGCLVIIKCLLFPGDKSLTSDNNRASEMLFGMLENCASKEELLYVCLIYTIWTHCTDMDSMDNCVYLCIQKFESYGWGASSEMECYFSYCSLIFYYQATTLQFYNLPKVRPFFEKGVTLFSANTAIWEVYIFFESKLRQENKPKIRAMKILKSASNAVVTACWYLFYVAVQQIEPTNSQYFLRTLDITLNNEKLKSVAKFWRIYLKILNLRLNGTEWVSAITTKALASCPCNKGVCMDVIDLLLKKEMESRAIICYIIMLEKGFRVHNEIRRDVLKFERGDELILSPN.

Over residues 1 to 17 (MPSNHNTSVPKFSSFNS) the composition is skewed to polar residues. The disordered stretch occupies residues 1–61 (MPSNHNTSVP…RSIQSNFAVD (61 aa)). The span at 19 to 33 (KAKKNPITKSNKKYR) shows a compositional bias: basic residues. Polar residues predominate over residues 37 to 59 (DQVSSNHAKSSFPSHRSIQSNFA). HAT repeat units follow at residues 159-191 (LNIL…YQER), 250-282 (WSKE…YFTG), 318-350 (TDVT…YELA), 355-386 (QANM…FWNS), 608-640 (EEKP…LEHL), 788-820 (YNLP…FESK), and 860-894 (TNSQ…ILNL). Residue S970 is modified to Phosphoserine.

This sequence belongs to the NRDE2 family.

The protein localises to the nucleus. The polypeptide is Protein NRDE2 homolog (Schizosaccharomyces pombe (strain 972 / ATCC 24843) (Fission yeast)).